A 655-amino-acid chain; its full sequence is MGIFSIANQHIRFAVKLATAIVLALFVGFHFQLETPRWAVLTAAIVAAGPAFAAGGEPYSGAIRYRGFLRIIGTFIGCIAGLVIIIAMIRAPLLMILVCCIWAGFCTWISSLVRIENSYAWGLAGYTALIIVITIQPEPLLTPQFAVERCSEIVIGIVCAIMADLLFSPRSIKQEVDRELESLLVAQYQLMQLCIKHGDGEVVDKAWGDLVRRTTALQGMRSNLNMESSRWARANRRLKAINTLSLTLITQSCETYLIQNTRPELITDTFREFFDTPVETAQDVHKQLKRLRRVIAWTGERETPVTIYSWVAAATRYQLLKRGVISNTKINATEEEILQGELEVKVESAERHHAMVNFWRTTLSCILGTLFWLWTGWTSGSGVMVMIAVVTSLAMRLPNPRMVAIDFIYGTLAALPLGLLYFLVIIPNTQQSMLLLCISLAVLGFFLGIEVQKRRLGSMGALASTINIIVPDNPMTFHFSQFLDSALGQIVGCVLAFTVILLVRDKSRDRTGRVLLNQFVSAAVSAMTTNVARRKENHLPALYQQLFLLINKFPGDLPKFRLALTMIIAHQRLRDAPIPVNEDLSAFHRQMRRTADHVISARSDDKRRRYFGQLLEELEIYQEKLRIWQAPPQVTEPVHRLAGMLHKYQHALTDS.

10 helical membrane passes run 13–33 (FAVK…HFQL), 38–58 (WAVL…GGEP), 69–89 (LRII…IAMI), 93–113 (LLMI…SSLV), 121–141 (WGLA…EPLL), 152–172 (EIVI…PRSI), 370–390 (LFWL…IAVV), 407–427 (FIYG…VIIP), 431–451 (QSML…GIEV), and 482–502 (FLDS…VILL).

This sequence belongs to the aromatic acid exporter ArAE (TC 2.A.85) family.

The protein resides in the cell inner membrane. In terms of biological role, forms an efflux pump with AaeA. Could function as a metabolic relief valve, allowing to eliminate certain compounds when they accumulate to high levels in the cell. This is p-hydroxybenzoic acid efflux pump subunit AaeB from Shigella dysenteriae serotype 1 (strain Sd197).